A 300-amino-acid polypeptide reads, in one-letter code: GTPase Era (300 aa).

Positions 7–175 (YCGFIAIVGR…EKFVRESLKE (169 aa)) constitute an Era-type G domain. Residues 15–22 (GRPNVGKS) are G1. 15–22 (GRPNVGKS) provides a ligand contact to GTP. Positions 41–45 (QTTRH) are G2. Positions 62–65 (DTPG) are G3. GTP contacts are provided by residues 62–66 (DTPGL) and 124–127 (NKVD). The segment at 124 to 127 (NKVD) is G4. A G5 region spans residues 154 to 156 (ISA). In terms of domain architecture, KH type-2 spans 206–283 (MGEELPYSVT…HLELWVKVKA (78 aa)).

Belongs to the TRAFAC class TrmE-Era-EngA-EngB-Septin-like GTPase superfamily. Era GTPase family. Monomer.

It is found in the cytoplasm. The protein resides in the cell inner membrane. Its function is as follows. An essential GTPase that binds both GDP and GTP, with rapid nucleotide exchange. Plays a role in 16S rRNA processing and 30S ribosomal subunit biogenesis and possibly also in cell cycle regulation and energy metabolism. This Glaesserella parasuis serovar 5 (strain SH0165) (Haemophilus parasuis) protein is GTPase Era.